We begin with the raw amino-acid sequence, 319 residues long: MALRGTVTDFSGFDGRADAEVLRKAMKGLGTDEDSILNLLTARSNAQRQQIAEEFKTLFGRDLVNDMKSELTGKFEKLIVALMKPSRLYDAYELKHALKGAGTDEKVLTEIIASRTPEELRAIKQAYEEEYGSNLEDDVVGDTSGYYQRMLVVLLQANRDPDTAIDDAQVELDAQALFQAGELKWGTDEEKFITILGTRSVSHLRRVFDKYMTISGFQIEETIDRETSGNLENLLLAVVKSIRSIPAYLAETLYYAMKGAGTDDHTLIRVIVSRSEIDLFNIRKEFRKNFATSLYSMIKGDTSGDYKKALLLLCGGEDD.

At Ala2 the chain carries N-acetylalanine. Annexin repeat units lie at residues 13–84 (FDGR…ALMK), 85–156 (PSRL…VLLQ), 168–240 (AQVE…AVVK), and 244–315 (SIPA…LLCG). Lys27 is covalently cross-linked (Glycyl lysine isopeptide (Lys-Gly) (interchain with G-Cter in SUMO1); alternate). Lys27 is covalently cross-linked (Glycyl lysine isopeptide (Lys-Gly) (interchain with G-Cter in SUMO2); alternate). Ser35 carries the phosphoserine modification. An N6-acetyllysine mark is found at Lys68, Lys74, Lys77, Lys95, and Lys99. Lys288 is subject to N6-succinyllysine. The [IL]-x-C-x-x-[DE] motif signature appears at 312–318 (LLCGGED).

Belongs to the annexin family. In terms of assembly, monomer. Binds ATRX, EIF5B and DNMT1. S-nitrosylation is induced by interferon-gamma and oxidatively-modified low-densitity lipoprotein (LDL(ox)) possibly implicating the iNOS-S100A8/9 transnitrosylase complex.

This protein is an anticoagulant protein that acts as an indirect inhibitor of the thromboplastin-specific complex, which is involved in the blood coagulation cascade. This Rattus norvegicus (Rat) protein is Annexin A5 (Anxa5).